A 245-amino-acid chain; its full sequence is uncharacterized protein (245 aa).

Positions 1-18 are cleaved as a signal peptide; sequence MKSAAILALLAQALAVTA. Residues 21-66 are disordered; that stretch reads VEGDRTPGTRTLDLPNFPGGSVPTRGVEKRADLPPDNGGGNAPDPD. Asn189 and Asn225 each carry an N-linked (GlcNAc...) asparagine glycan.

Its subcellular location is the secreted. This is an uncharacterized protein from Arthroderma benhamiae (strain ATCC MYA-4681 / CBS 112371) (Trichophyton mentagrophytes).